Reading from the N-terminus, the 331-residue chain is Tyrosine recombinase XerD (331 aa).

The Core-binding (CB) domain occupies 8–93; that stretch reads GRDGARLESF…SMRQFYRFLY (86 aa). The Tyr recombinase domain maps to 114–318; that stretch reads ALPKTMSVAD…LEERLQELVQ (205 aa). Catalysis depends on residues arginine 161 and lysine 185. Over residues 214–228 the composition is skewed to basic and acidic residues; that stretch reads QEKSKAAASQKKTDT. The segment at 214-239 is disordered; sequence QEKSKAAASQKKTDTAESPWLFPSNS. Catalysis depends on residues histidine 270, arginine 273, and histidine 296. The active-site O-(3'-phospho-DNA)-tyrosine intermediate is tyrosine 305.

It belongs to the 'phage' integrase family. XerD subfamily. Forms a cyclic heterotetrameric complex composed of two molecules of XerC and two molecules of XerD.

The protein localises to the cytoplasm. Its function is as follows. Site-specific tyrosine recombinase, which acts by catalyzing the cutting and rejoining of the recombining DNA molecules. The XerC-XerD complex is essential to convert dimers of the bacterial chromosome into monomers to permit their segregation at cell division. It also contributes to the segregational stability of plasmids. In Agrobacterium fabrum (strain C58 / ATCC 33970) (Agrobacterium tumefaciens (strain C58)), this protein is Tyrosine recombinase XerD.